The following is a 185-amino-acid chain: Ribosome-recycling factor (185 aa).

It belongs to the RRF family.

The protein localises to the cytoplasm. Its function is as follows. Responsible for the release of ribosomes from messenger RNA at the termination of protein biosynthesis. May increase the efficiency of translation by recycling ribosomes from one round of translation to another. The chain is Ribosome-recycling factor from Listeria monocytogenes serotype 4a (strain HCC23).